The sequence spans 946 residues: Bifunctional glutamine synthetase adenylyltransferase/adenylyl-removing enzyme (946 aa).

Positions 1–440 are adenylyl removase; sequence MKPLSSPLQQ…VFNELIGDDE (440 aa). The segment at 449 to 946 is adenylyl transferase; that stretch reads SEQWRELWQD…ASWQKWLVEE (498 aa).

The protein belongs to the GlnE family. It depends on Mg(2+) as a cofactor.

It carries out the reaction [glutamine synthetase]-O(4)-(5'-adenylyl)-L-tyrosine + phosphate = [glutamine synthetase]-L-tyrosine + ADP. It catalyses the reaction [glutamine synthetase]-L-tyrosine + ATP = [glutamine synthetase]-O(4)-(5'-adenylyl)-L-tyrosine + diphosphate. In terms of biological role, involved in the regulation of glutamine synthetase GlnA, a key enzyme in the process to assimilate ammonia. When cellular nitrogen levels are high, the C-terminal adenylyl transferase (AT) inactivates GlnA by covalent transfer of an adenylyl group from ATP to specific tyrosine residue of GlnA, thus reducing its activity. Conversely, when nitrogen levels are low, the N-terminal adenylyl removase (AR) activates GlnA by removing the adenylyl group by phosphorolysis, increasing its activity. The regulatory region of GlnE binds the signal transduction protein PII (GlnB) which indicates the nitrogen status of the cell. The polypeptide is Bifunctional glutamine synthetase adenylyltransferase/adenylyl-removing enzyme (Escherichia coli O45:K1 (strain S88 / ExPEC)).